Consider the following 799-residue polypeptide: Protein translocase subunit SecA (799 aa).

Residues Gln-85, 103-107, and Asp-504 each bind ATP; that span reads GEGKT.

Belongs to the SecA family. Monomer and homodimer. Part of the essential Sec protein translocation apparatus which comprises SecA, SecYEG and auxiliary proteins SecDF. Other proteins may also be involved.

The protein localises to the cell membrane. Its subcellular location is the cytoplasm. The enzyme catalyses ATP + H2O + cellular proteinSide 1 = ADP + phosphate + cellular proteinSide 2.. In terms of biological role, part of the Sec protein translocase complex. Interacts with the SecYEG preprotein conducting channel. Has a central role in coupling the hydrolysis of ATP to the transfer of proteins into and across the cell membrane, serving as an ATP-driven molecular motor driving the stepwise translocation of polypeptide chains across the membrane. The chain is Protein translocase subunit SecA from Lactobacillus gasseri (strain ATCC 33323 / DSM 20243 / BCRC 14619 / CIP 102991 / JCM 1131 / KCTC 3163 / NCIMB 11718 / NCTC 13722 / AM63).